The chain runs to 415 residues: MATH domain and coiled-coil domain-containing protein At2g42465 (415 aa).

An MATH domain is found at arginine 6 to isoleucine 130. Positions phenylalanine 244 to lysine 341 form a coiled coil.

This chain is MATH domain and coiled-coil domain-containing protein At2g42465, found in Arabidopsis thaliana (Mouse-ear cress).